The primary structure comprises 357 residues: Acyl-coenzyme A diphosphatase NUDT19 (357 aa).

Residues 10–242 (AATVMLAAGW…IWLAPPQFYE (233 aa)) form the Nudix hydrolase domain. A Nudix box motif is present at residues 97 to 118 (AALPDDVALRICAIRETFEEAG). Residues Glu112 and Glu116 each contribute to the Mg(2+) site. Lys300 carries the post-translational modification N6-succinyllysine. The Microbody targeting signal motif lies at 355–357 (ARL).

This sequence belongs to the Nudix hydrolase family. In terms of assembly, monomer. The cofactor is Mg(2+). Mn(2+) is required as a cofactor.

It localises to the peroxisome. The catalysed reaction is an acyl-CoA + H2O = an acyl-4'-phosphopantetheine + adenosine 3',5'-bisphosphate + 2 H(+). It catalyses the reaction CoA + H2O = (R)-4'-phosphopantetheine + adenosine 3',5'-bisphosphate + 2 H(+). It carries out the reaction hexanoyl-CoA + H2O = hexanoyl-4'-phosphopantetheine + adenosine 3',5'-bisphosphate + 2 H(+). The enzyme catalyses octanoyl-CoA + H2O = S-octanoyl-4'-phosphopantetheine + adenosine 3',5'-bisphosphate + 2 H(+). The catalysed reaction is butanoyl-CoA + H2O = S-butanoyl-4'-phosphopantetheine + adenosine 3',5'-bisphosphate + 2 H(+). It catalyses the reaction propanoyl-CoA + H2O = propanoyl-4'-phosphopantetheine + adenosine 3',5'-bisphosphate + 2 H(+). It carries out the reaction malonyl-CoA + H2O = malonyl-4'-phosphopantetheine + adenosine 3',5'-bisphosphate + 2 H(+). The enzyme catalyses succinyl-CoA + H2O = succinyl-4'-phosphopantetheine + adenosine 3',5'-bisphosphate + 2 H(+). The catalysed reaction is choloyl-CoA + H2O = S-choloyl-4'-phosphopantetheine + adenosine 3',5'-bisphosphate + 2 H(+). It catalyses the reaction 4,8-dimethylnonanoyl-CoA + H2O = S-(4,8-dimethylnonanoyl)-4'-phosphopantetheine + adenosine 3',5'-bisphosphate + 2 H(+). It carries out the reaction (9Z,12Z,15Z)-octadecatrienoyl-CoA + H2O = S-(9Z,12Z,15Z-octadecatrienoyl)-4'-phosphopantetheine + adenosine 3',5'-bisphosphate + 2 H(+). The enzyme catalyses (9Z,12Z)-octadecadienoyl-CoA + H2O = S-(9Z,12Z-octadecadienoyl)-4'-phosphopantetheine + adenosine 3',5'-bisphosphate + 2 H(+). The catalysed reaction is (9Z)-hexadecenoyl-CoA + H2O = S-(9Z-hexadecenoyl)-4'-phosphopantetheine + adenosine 3',5'-bisphosphate + 2 H(+). It catalyses the reaction (9Z)-tetradecenoyl-CoA + H2O = S-(9Z-tetradecenoyl)-4'-phosphopantetheine + adenosine 3',5'-bisphosphate + 2 H(+). It carries out the reaction (6Z)-octenoyl-CoA + H2O = S-(6Z-octenoyl)-4'-phosphopantetheine + adenosine 3',5'-bisphosphate + 2 H(+). The enzyme catalyses hexadecanoyl-CoA + H2O = S-hexadecanoyl-4'-phosphopantetheine + adenosine 3',5'-bisphosphate + 2 H(+). The catalysed reaction is tetradecanoyl-CoA + H2O = tetradecanoyl-4'-phosphopantetheine + adenosine 3',5'-bisphosphate + 2 H(+). It catalyses the reaction dodecanoyl-CoA + H2O = S-dodecanoyl-4'-phosphopantetheine + adenosine 3',5'-bisphosphate + 2 H(+). It carries out the reaction a 5'-end CoA-ribonucleoside in mRNA + H2O = a 5'-end phospho-adenosine-phospho-ribonucleoside in mRNA + (R)-4'-phosphopantetheine + 2 H(+). Fatty acyl-coenzyme A (CoA) diphosphatase that hydrolyzes fatty acyl-CoA to yield acyl-4'-phosphopantetheine and adenosine 3',5'-bisphosphate. Mediates the hydrolysis of a wide range of CoA esters, including choloyl-CoA and branched-chain fatty-acyl-CoA esters and at low substrate concentrations medium and long-chain fatty-acyl-CoA esters are the primary substrates. Highest activity seen with medium-chain acyl-CoA esters and higher rates of activity seen with the unsaturated acyl-CoA esters compared with the saturated esters. Exhibits decapping activity towards dpCoA-capped RNAs in vitro. The polypeptide is Acyl-coenzyme A diphosphatase NUDT19 (Nudt19) (Rattus norvegicus (Rat)).